The primary structure comprises 412 residues: Zinc finger protein 821 (412 aa).

The disordered stretch occupies residues 26 to 83 (RQAMMKTDFPGDLGSQRQAIQQLRDQDSSSSDSEGDEEETTQDEVSSHTSEEDGGVVK). Residues 58-67 (SEGDEEETTQ) are compositionally biased toward acidic residues. 2 consecutive C2H2-type zinc fingers follow at residues 116–140 (GLCQ…VYQH) and 150–172 (YMCP…LLIH). A coiled-coil region spans residues 257 to 366 (KWALRRQNEP…EKMDMMLRAQ (110 aa)). Residues 278–319 (RTAKKSRRDNETPEEREVRRMRDREAKRLQRMQETDEQRARR) form a disordered region.

It belongs to the krueppel C2H2-type zinc-finger protein family.

The protein localises to the nucleus. In terms of biological role, may be involved in transcriptional regulation. This is Zinc finger protein 821 (ZNF821) from Bos taurus (Bovine).